Here is a 238-residue protein sequence, read N- to C-terminus: Large ribosomal subunit protein uL2 (238 aa).

The span at Met1–Gly11 shows a compositional bias: polar residues. Disordered regions lie at residues Met1–His22 and Phe202–Gly223.

It belongs to the universal ribosomal protein uL2 family. In terms of assembly, part of the 50S ribosomal subunit. Forms a bridge to the 30S subunit in the 70S ribosome.

In terms of biological role, one of the primary rRNA binding proteins. Required for association of the 30S and 50S subunits to form the 70S ribosome, for tRNA binding and peptide bond formation. It has been suggested to have peptidyltransferase activity; this is somewhat controversial. Makes several contacts with the 16S rRNA in the 70S ribosome. In Methanosarcina acetivorans (strain ATCC 35395 / DSM 2834 / JCM 12185 / C2A), this protein is Large ribosomal subunit protein uL2.